A 239-amino-acid polypeptide reads, in one-letter code: Thymidylate kinase (239 aa).

10–17 (GINGVGKS) is an ATP binding site.

The protein belongs to the thymidylate kinase family.

It carries out the reaction dTMP + ATP = dTDP + ADP. It functions in the pathway pyrimidine metabolism; dTTP biosynthesis. Its function is as follows. Catalyzes the conversion of dTMP to dTDP. This is Thymidylate kinase (TMK) from African swine fever virus (isolate Warthog/Namibia/Wart80/1980) (ASFV).